The sequence spans 322 residues: Ferredoxin--NADP reductase (322 aa).

7 residues coordinate FAD: Asp34, Gln42, Tyr47, Val87, Phe120, Asp279, and Thr320.

It belongs to the ferredoxin--NADP reductase type 2 family. As to quaternary structure, homodimer. FAD is required as a cofactor.

The catalysed reaction is 2 reduced [2Fe-2S]-[ferredoxin] + NADP(+) + H(+) = 2 oxidized [2Fe-2S]-[ferredoxin] + NADPH. The polypeptide is Ferredoxin--NADP reductase (Streptococcus pneumoniae serotype 2 (strain D39 / NCTC 7466)).